A 342-amino-acid polypeptide reads, in one-letter code: tRNA N6-adenosine threonylcarbamoyltransferase (342 aa).

The Fe cation site is built by His111 and His115. Substrate contacts are provided by residues 133-137 (VVSGG), Asp166, Gly179, Asp183, and Asn273. Asp301 contacts Fe cation.

It belongs to the KAE1 / TsaD family. Requires Fe(2+) as cofactor.

Its subcellular location is the cytoplasm. It catalyses the reaction L-threonylcarbamoyladenylate + adenosine(37) in tRNA = N(6)-L-threonylcarbamoyladenosine(37) in tRNA + AMP + H(+). In terms of biological role, required for the formation of a threonylcarbamoyl group on adenosine at position 37 (t(6)A37) in tRNAs that read codons beginning with adenine. Is involved in the transfer of the threonylcarbamoyl moiety of threonylcarbamoyl-AMP (TC-AMP) to the N6 group of A37, together with TsaE and TsaB. TsaD likely plays a direct catalytic role in this reaction. The protein is tRNA N6-adenosine threonylcarbamoyltransferase of Trichlorobacter lovleyi (strain ATCC BAA-1151 / DSM 17278 / SZ) (Geobacter lovleyi).